The sequence spans 105 residues: dATP/dGTP diphosphohydrolase (105 aa).

Belongs to the Caudovirales dATP/dGTP diphosphohydrolase family. The cofactor is Co(2+).

It carries out the reaction dGTP + H2O = dGMP + diphosphate + H(+). The enzyme catalyses dATP + H2O = dAMP + diphosphate + H(+). It functions in the pathway purine metabolism. Its function is as follows. Catalyzes the hydrolysis of dGTP into dGMP, which is needed among other for the first step of biosynthesis of dZTP (2-amino-2'-deoxyadenosine-5'-triphosphate). The protein is dATP/dGTP diphosphohydrolase of Cyanophage S-2L (Cyanobacteria phage S-2L).